The following is a 384-amino-acid chain: Early estrogen-induced gene 1 protein (384 aa).

Residues 2 to 145 (AFLMKKKKFK…ILKVTIGMFL (144 aa)) enclose the C2 NT-type domain. Residues 129–138 (NTRQDNSILK) form a required for interaction with TNFRSF11A/RANK region. The segment at 173–315 (LTCKGGGTSS…RRKKDSVESH (143 aa)) is disordered. Over residues 183 to 193 (GGSSTNSLTGS) the composition is skewed to low complexity. A compositionally biased stretch (polar residues) spans 227–254 (SRNSSYASQQSKISGYSTEHSRSSSLSD). Composition is skewed to basic and acidic residues over residues 280-292 (GSER…EKPP) and 299-315 (HLSD…VESH).

This sequence belongs to the EEIG family. In terms of assembly, part of a complex composed of EEIG1, TNFRSF11A/RANK, PLCG2, GAB2, TEC and BTK; complex formation increases in the presence of TNFSF11/RANKL. Interacts with PRDM1/BLIMP1; following TNFSF11/RANKL stimulation in bone marrow-derived macrophages, the interaction promotes the binding of PRDM1/BLIMP1 to the gene promoter of IRF8.

The protein resides in the nucleus. Its subcellular location is the cytoplasm. It localises to the membrane raft. In terms of biological role, key component of TNFSF11/RANKL- and TNF-induced osteoclastogenesis pathways, thereby mediates bone resorption in pathological bone loss conditions. Required for TNFSF11/RANKL-induced osteoclastogenesis via its interaction with TNFRSF11A/RANK, thereby facilitates the downsteam transcription of NFATC1 and activation of PLCG2. Facilitates recruitment of the transcriptional repressor PRDM1/BLIMP1 to the promoter of the anti-osteoclastogenesis gene IRF8, thereby resulting in transcription of osteoclast differentiation factors. May play a role in estrogen action. The polypeptide is Early estrogen-induced gene 1 protein (Homo sapiens (Human)).